A 398-amino-acid chain; its full sequence is Argininosuccinate synthase (398 aa).

Residue 9 to 17 coordinates ATP; it reads AYSGGLDTS. Y85 contributes to the L-citrulline binding site. An ATP-binding site is contributed by G115. T117, N121, and D122 together coordinate L-aspartate. Residue N121 coordinates L-citrulline. Positions 125, 173, 258, and 270 each coordinate L-citrulline.

The protein belongs to the argininosuccinate synthase family. Type 1 subfamily. As to quaternary structure, homotetramer.

It localises to the cytoplasm. It carries out the reaction L-citrulline + L-aspartate + ATP = 2-(N(omega)-L-arginino)succinate + AMP + diphosphate + H(+). It participates in amino-acid biosynthesis; L-arginine biosynthesis; L-arginine from L-ornithine and carbamoyl phosphate: step 2/3. The sequence is that of Argininosuccinate synthase from Streptococcus pneumoniae (strain Hungary19A-6).